The sequence spans 459 residues: MSNLPVEPEFEQAYKELASTLENSTLFEQHPEYRRALQVVSVPERVIQFRVVWENDKGEVQINRGYRVQFNSALGPYKGGLRFHPSVNLSILKFLGFEQIFKNALTGLNMGGGKGGSDFDPKGKSDSEIRRFCTAFMTELCKHIGADTDVPAGDIGVTGREVGFLFGQYRRIRNQWEGVLTGKGGSWGGSLIRPEATGYGVVYYVEHMIKHVTGGKESFAGKRVAISGSGNVAQYAALKVIELGGSVVSLSDSKGSLIVKDESASFTPEEIALIADLKVARKQLSELATSSAFAGKFTYIPDARPWTNIPGKFEVALPSATQNEVSGEEAEHLIKSGVRYIAEGSNMGCTQAAIDIFEAHRNANPGDAIWYAPGKAANAGGVAVSGLEMAQNSARLSWTSEEVDARLKGIMEDCFKNGLETAQKFATPAKGVLPSLVTGSNIAGFTKVAEAMKDQGDWW.

Residue Lys114 is part of the active site.

The protein belongs to the Glu/Leu/Phe/Val dehydrogenases family. As to quaternary structure, homohexamer.

The catalysed reaction is L-glutamate + NADP(+) + H2O = 2-oxoglutarate + NH4(+) + NADPH + H(+). The sequence is that of NADP-specific glutamate dehydrogenase (gdhA) from Emericella nidulans (strain FGSC A4 / ATCC 38163 / CBS 112.46 / NRRL 194 / M139) (Aspergillus nidulans).